Reading from the N-terminus, the 127-residue chain is Holotricin-2 (127 aa).

A signal peptide spans 1–15 (MMKLVIALCLIGISA). A propeptide spanning residues 16 to 55 (AYVVPVYYEIYPEDATFDEADIEPQLSPAELHHGSIRERR) is cleaved from the precursor. Residues 43 to 84 (PAELHHGSIRERRSLQPGAPSFPMPGSQLPTSVSGNVEKQGR) are disordered. Positions 45–56 (ELHHGSIRERRS) are enriched in basic and acidic residues. Residues 70–84 (QLPTSVSGNVEKQGR) show a composition bias toward polar residues.

This sequence belongs to the coleoptericin family. As to expression, hemolymph.

The protein localises to the secreted. Its function is as follows. Antibacterial activity against Gram-negative bacteria but not against Gram-positive bacteria. This Holotrichia diomphalia (Korean black chafer) protein is Holotricin-2.